The following is a 559-amino-acid chain: Serine/threonine-protein kinase bur1 (559 aa).

One can recognise a Protein kinase domain in the interval 40–341; it reads YEVLGKLGEG…AIDALNHPYF (302 aa). Residues 46–54 and Lys69 each bind ATP; that span reads LGEGTFGEV. Asp171 (proton acceptor) is an active-site residue. The span at 359–372 shows a compositional bias: basic and acidic residues; sequence SHEFDRRKFQDRKA. The segment at 359–559 is disordered; the sequence is SHEFDRRKFQ…GRDRDAYARR (201 aa). A compositionally biased stretch (gly residues) spans 400–414; that stretch reads GRDGYGGGGRNGANG. Composition is skewed to basic and acidic residues over residues 457–467, 491–534, and 543–559; these read DHTDGYRDRPP, YDRD…DSRT, and PVRD…YARR.

This sequence belongs to the protein kinase superfamily. CMGC Ser/Thr protein kinase family. CDC2/CDKX subfamily.

It is found in the nucleus. The catalysed reaction is L-seryl-[protein] + ATP = O-phospho-L-seryl-[protein] + ADP + H(+). It carries out the reaction L-threonyl-[protein] + ATP = O-phospho-L-threonyl-[protein] + ADP + H(+). The enzyme catalyses [DNA-directed RNA polymerase] + ATP = phospho-[DNA-directed RNA polymerase] + ADP + H(+). Functionally, serine/threonine-protein kinase involved in transcription regulation. Phosphorylates the mus-8/ubc2 ubiquitin-conjugating enzyme (E2), leading to monoubiquitination of histone H2B and the silencing of telomeric-associated genes. Also required for histone H3 methylation. Necessary for the recovery from pheromone-induced growth arrest in the cell cycle G1 phase. This is Serine/threonine-protein kinase bur1 (stk-1) from Neurospora crassa (strain ATCC 24698 / 74-OR23-1A / CBS 708.71 / DSM 1257 / FGSC 987).